The chain runs to 206 residues: dITP/XTP pyrophosphatase (206 aa).

7 to 12 is a binding site for substrate; sequence SSHGYK. Asp70 functions as the Proton acceptor in the catalytic mechanism. Asp70 contacts Mg(2+). Substrate is bound by residues Thr71, 154-157, Lys177, and 182-183; these read FGYD and HR.

This sequence belongs to the HAM1 NTPase family. In terms of assembly, homodimer. Requires Mg(2+) as cofactor.

It catalyses the reaction XTP + H2O = XMP + diphosphate + H(+). The catalysed reaction is dITP + H2O = dIMP + diphosphate + H(+). The enzyme catalyses ITP + H2O = IMP + diphosphate + H(+). Its function is as follows. Pyrophosphatase that catalyzes the hydrolysis of nucleoside triphosphates to their monophosphate derivatives, with a high preference for the non-canonical purine nucleotides XTP (xanthosine triphosphate), dITP (deoxyinosine triphosphate) and ITP. Seems to function as a house-cleaning enzyme that removes non-canonical purine nucleotides from the nucleotide pool, thus preventing their incorporation into DNA/RNA and avoiding chromosomal lesions. The sequence is that of dITP/XTP pyrophosphatase from Chlamydia pneumoniae (Chlamydophila pneumoniae).